A 463-amino-acid chain; its full sequence is Dipeptidyl peptidase 1 (463 aa).

Residues 1–24 form the signal peptide; that stretch reads MGVGPASLLAALLLLLSGDRAVRC. N-linked (GlcNAc...) asparagine glycosylation is found at asparagine 29, asparagine 53, and asparagine 119. Intrachain disulfides connect cysteine 30/cysteine 118, cysteine 54/cysteine 136, cysteine 255/cysteine 298, cysteine 291/cysteine 331, and cysteine 321/cysteine 337. The propeptide occupies 135 to 230; sequence ACFTGKKVGT…TAEIQQKILH (96 aa). Cysteine 258 is an active-site residue. Asparagine 276 is a glycosylation site (N-linked (GlcNAc...) asparagine). Positions 302 and 304 each coordinate chloride. Chloride is bound at residue tyrosine 347. Residues histidine 405 and asparagine 427 contribute to the active site.

The protein belongs to the peptidase C1 family. As to quaternary structure, tetramer of heterotrimers consisting of exclusion domain, heavy- and light chains. Requires chloride as cofactor.

Its subcellular location is the lysosome. It catalyses the reaction Release of an N-terminal dipeptide, Xaa-Yaa-|-Zaa-, except when Xaa is Arg or Lys, or Yaa or Zaa is Pro.. Its function is as follows. Thiol protease. Has dipeptidylpeptidase activity. Active against a broad range of dipeptide substrates composed of both polar and hydrophobic amino acids. Proline cannot occupy the P1 position and arginine cannot occupy the P2 position of the substrate. Can act as both an exopeptidase and endopeptidase. Activates serine proteases such as elastase, cathepsin G and granzymes A and B. The protein is Dipeptidyl peptidase 1 (CTSC) of Macaca fascicularis (Crab-eating macaque).